A 409-amino-acid polypeptide reads, in one-letter code: MAVSYDFRPISVCRARESNNVVVKKRSKRSLIGLSQNEMAEALKAIGVPEQQTRMRVRQLWHWLYVRGVSNFDEILNISKPIREMLKNHFSIARPEIVGEQISKDGTRKWLLRFPAREDGRPVEIETVYIPEEGRGTLCLSSQVGCTLTCSFCYTGTQVLVRNLTAEEILAQLLVARDCLGDFPNRTTPDGAIVPVEGRKITNIVMMGMGEPLYNFEVVKKALLIASDGDGLSLSKRRITLSTSGVVPEIVRAGEEIGVMLAVSLHAVHDTLRDMLVPINKKYPLALLIDACRNYPGLSNAKRITFEYVMLKGINDSLDDAKRLIQLLKGIPAKINLIPFNPWPGSNYQCSDWEQIERFADVVNQAGYASPIRIPRGRDILAACGQLKSASERLRKSGRLQIEYAVGNK.

The active-site Proton acceptor is the Glu-126. The Radical SAM core domain occupies 132–373; it reads EEGRGTLCLS…NQAGYASPIR (242 aa). A disulfide bridge connects residues Cys-139 and Cys-384. Positions 146, 150, and 153 each coordinate [4Fe-4S] cluster. Residues 210–211, Ser-242, 264–266, and Asn-341 each bind S-adenosyl-L-methionine; these read GE and SLH. Cys-384 (S-methylcysteine intermediate) is an active-site residue.

The protein belongs to the radical SAM superfamily. RlmN family. The cofactor is [4Fe-4S] cluster.

Its subcellular location is the cytoplasm. The catalysed reaction is adenosine(2503) in 23S rRNA + 2 reduced [2Fe-2S]-[ferredoxin] + 2 S-adenosyl-L-methionine = 2-methyladenosine(2503) in 23S rRNA + 5'-deoxyadenosine + L-methionine + 2 oxidized [2Fe-2S]-[ferredoxin] + S-adenosyl-L-homocysteine. It carries out the reaction adenosine(37) in tRNA + 2 reduced [2Fe-2S]-[ferredoxin] + 2 S-adenosyl-L-methionine = 2-methyladenosine(37) in tRNA + 5'-deoxyadenosine + L-methionine + 2 oxidized [2Fe-2S]-[ferredoxin] + S-adenosyl-L-homocysteine. In terms of biological role, specifically methylates position 2 of adenine 2503 in 23S rRNA and position 2 of adenine 37 in tRNAs. m2A2503 modification seems to play a crucial role in the proofreading step occurring at the peptidyl transferase center and thus would serve to optimize ribosomal fidelity. The sequence is that of Dual-specificity RNA methyltransferase RlmN from Bartonella quintana (strain Toulouse) (Rochalimaea quintana).